Here is a 340-residue protein sequence, read N- to C-terminus: Glycerol-3-phosphate dehydrogenase [NAD(P)+] (340 aa).

Residues Ser-14, Trp-15, and Lys-109 each contribute to the NADPH site. Residues Lys-109, Gly-140, and Ser-142 each coordinate sn-glycerol 3-phosphate. Residue Ala-144 coordinates NADPH. The sn-glycerol 3-phosphate site is built by Lys-195, Asp-248, Ser-258, Arg-259, and Asn-260. Residue Lys-195 is the Proton acceptor of the active site. Arg-259 contacts NADPH. Residues Val-283 and Glu-285 each contribute to the NADPH site.

This sequence belongs to the NAD-dependent glycerol-3-phosphate dehydrogenase family.

The protein resides in the cytoplasm. It carries out the reaction sn-glycerol 3-phosphate + NAD(+) = dihydroxyacetone phosphate + NADH + H(+). It catalyses the reaction sn-glycerol 3-phosphate + NADP(+) = dihydroxyacetone phosphate + NADPH + H(+). It participates in membrane lipid metabolism; glycerophospholipid metabolism. In terms of biological role, catalyzes the reduction of the glycolytic intermediate dihydroxyacetone phosphate (DHAP) to sn-glycerol 3-phosphate (G3P), the key precursor for phospholipid synthesis. In Syntrophobacter fumaroxidans (strain DSM 10017 / MPOB), this protein is Glycerol-3-phosphate dehydrogenase [NAD(P)+].